The chain runs to 433 residues: Myricetin 3-O-glucosyl 1,2-rhamnoside 6'-O-caffeoyltransferase AT1 (433 aa).

Catalysis depends on proton acceptor residues His157 and Asp375.

This sequence belongs to the plant acyltransferase family. In terms of tissue distribution, expressed in young cromes.

It catalyses the reaction myricetin 3-O-[beta-D-glucosyl-(1-&gt;2)-alpha-L-rhamnoside] + (E)-caffeoyl-CoA = myricetin 3-O-[(6-O-(E)-caffeoyl-beta-D-glucosyl)-(1-&gt;2)-alpha-L-rhamnoside] + CoA. It participates in flavonoid metabolism. Its function is as follows. Caffeoyltransferase involved in montbretin A (MbA) biosynthesis. Catalyzes the caffeoylation of myricetin 3-O-beta-D-glucosyl 1,2-alpha-L-rhamnoside (MRG) to produce myricetin 3-O-(6'-O-caffeoyl)-beta-D-glucosyl 1,2-alpha-L-rhamnoside (mini-MbA), a precursor of MbA. Mini-MbA and MbA are potent inhibitors of human pancreatic alpha-amylase and are being developed as drug candidates to treat type-2 diabetes. In vitro, is able to catalyze the caffeoylation of quercetin 3-O-sophoroside (QGG), although QGG may not be a physiological substrate in vivo. In vitro, can use coumaryl-CoA, feruloyl-CoA and acetyl-CoA, although these three acyl donors may not be physiological in vivo. The protein is Myricetin 3-O-glucosyl 1,2-rhamnoside 6'-O-caffeoyltransferase AT1 of Crocosmia x crocosmiiflora (Montbretia).